The primary structure comprises 326 residues: Glycerol-3-phosphate dehydrogenase [NAD(P)+] (326 aa).

Residues serine 10, phenylalanine 11, arginine 31, and lysine 108 each contribute to the NADPH site. Sn-glycerol 3-phosphate contacts are provided by lysine 108, glycine 136, and serine 138. Alanine 140 lines the NADPH pocket. 5 residues coordinate sn-glycerol 3-phosphate: lysine 191, aspartate 246, serine 256, arginine 257, and asparagine 258. Catalysis depends on lysine 191, which acts as the Proton acceptor. NADPH is bound at residue arginine 257. The NADPH site is built by isoleucine 281 and glutamate 283.

Belongs to the NAD-dependent glycerol-3-phosphate dehydrogenase family.

Its subcellular location is the cytoplasm. The catalysed reaction is sn-glycerol 3-phosphate + NAD(+) = dihydroxyacetone phosphate + NADH + H(+). It carries out the reaction sn-glycerol 3-phosphate + NADP(+) = dihydroxyacetone phosphate + NADPH + H(+). It functions in the pathway membrane lipid metabolism; glycerophospholipid metabolism. Its function is as follows. Catalyzes the reduction of the glycolytic intermediate dihydroxyacetone phosphate (DHAP) to sn-glycerol 3-phosphate (G3P), the key precursor for phospholipid synthesis. The protein is Glycerol-3-phosphate dehydrogenase [NAD(P)+] of Ehrlichia chaffeensis (strain ATCC CRL-10679 / Arkansas).